A 257-amino-acid chain; its full sequence is Chlorocatechol 1,2-dioxygenase (257 aa).

Residues Tyr-134, Tyr-169, His-194, and His-196 each contribute to the Fe cation site.

This sequence belongs to the intradiol ring-cleavage dioxygenase family. The cofactor is Fe(3+).

It carries out the reaction 4-chlorocatechol + O2 = 3-chloro-cis,cis-muconate + 2 H(+). The catalysed reaction is 3,5-dichlorocatechol + O2 = (2E,4E)-2,4-dichloromuconate + 2 H(+). This Rhodococcus opacus (Nocardia opaca) protein is Chlorocatechol 1,2-dioxygenase (clcA).